The primary structure comprises 292 residues: MSISADKIKELRSRTQAGFMDCKKALEESDNDIEKAIAWLREKGISKAAKKASAIAAEGQTTVVEKGDNCVVLEVNSQTDFVSKNADFVKFVKDVAEVILKNKSADNVDSLVLPNKKTVADTAIDLTATIGEKISVRRAQLLTKKKGQSFGVYQHFNGRISAAVLIDGEVSSEVGKDVAMQVASMNPKFVNSSQVDKKWKDEEEKLLIQKTIEEGKPKEFAEKIVAGRMVKMLAEVCLEEQPFIKDNGITIIKYLKQNKANKVLEMVRFEVGEGIEKQEANFADEVKAQMKK.

The involved in Mg(2+) ion dislocation from EF-Tu stretch occupies residues 79 to 82 (TDFV).

This sequence belongs to the EF-Ts family.

The protein resides in the cytoplasm. In terms of biological role, associates with the EF-Tu.GDP complex and induces the exchange of GDP to GTP. It remains bound to the aminoacyl-tRNA.EF-Tu.GTP complex up to the GTP hydrolysis stage on the ribosome. The protein is Elongation factor Ts of Malacoplasma penetrans (strain HF-2) (Mycoplasma penetrans).